Consider the following 143-residue polypeptide: Transcriptional regulator MraZ (143 aa).

SpoVT-AbrB domains are found at residues 5-47 and 76-119; these read EYQH…PKEE and AGEC…SRER.

This sequence belongs to the MraZ family. In terms of assembly, forms oligomers.

It localises to the cytoplasm. The protein localises to the nucleoid. The sequence is that of Transcriptional regulator MraZ from Heliobacterium modesticaldum (strain ATCC 51547 / Ice1).